The sequence spans 283 residues: Probable endonuclease 4 (283 aa).

Residues His-69, His-109, Glu-145, Asp-179, His-182, His-216, Asp-229, His-231, and Glu-261 each coordinate Zn(2+).

This sequence belongs to the AP endonuclease 2 family. The cofactor is Zn(2+).

The enzyme catalyses Endonucleolytic cleavage to 5'-phosphooligonucleotide end-products.. Endonuclease IV plays a role in DNA repair. It cleaves phosphodiester bonds at apurinic or apyrimidinic (AP) sites, generating a 3'-hydroxyl group and a 5'-terminal sugar phosphate. This is Probable endonuclease 4 from Campylobacter concisus (strain 13826).